The primary structure comprises 39 residues: Phosphatase RapI inhibitor (39 aa).

The propeptide occupies 1-34; the sequence is MKISRILLAAVILSSVFSITYLQSDHNTEIKVAA.

Belongs to the Phr family. In terms of processing, contains a predicted signal peptide cleavage site in the N-terminal region, however the propeptide is probably subject to only one processing event, at the N-terminal end of the mature peptide.

It is found in the secreted. It localises to the cytoplasm. Intercellular signaling molecule that inhibits excision of the mobile genetic element ICEBs1 when cells are crowded by cells that contain ICEBs1 and produce the PhrI peptide. Secreted during production, but the mature peptide acts intracellularly, indicating that it needs to be imported into the cell to function. Acts by inhibiting RapI activity. The chain is Phosphatase RapI inhibitor (phrI) from Bacillus subtilis (strain 168).